The chain runs to 145 residues: LIM domain only protein 3 (145 aa).

2 LIM zinc-binding domains span residues 11–73 (KGCA…LFGV) and 75–137 (GNCA…GLMK).

In Danio rerio (Zebrafish), this protein is LIM domain only protein 3.